The sequence spans 213 residues: MEPDFWHARWQTKQIQGFHEGKANAFLVKHFPRLPVAPGARVFVPLCGKTRDIAWLLGEGFRVAGAELSRIAVEELFAELGVVPEVTTQGAHTRFSAPGLDIFQGDIFALTPDTLGPVDAVWDRAALVALPKDMRARYAPHLVALTDTAPQLLVCFEYDQPLLAGPPFSVPPEETRTLYGADYVVAAIDTAPVPGGLKGQCEAVEHVWLLERA.

The S-adenosyl-L-methionine site is built by Trp10, Leu46, Glu67, and Arg124.

Belongs to the class I-like SAM-binding methyltransferase superfamily. TPMT family.

The protein resides in the cytoplasm. It catalyses the reaction S-adenosyl-L-methionine + a thiopurine = S-adenosyl-L-homocysteine + a thiopurine S-methylether.. The chain is Thiopurine S-methyltransferase from Xanthobacter autotrophicus (strain ATCC BAA-1158 / Py2).